The primary structure comprises 1232 residues: DNA-directed RNA polymerase subunit beta (1232 aa).

Residues 1170–1232 (SVDEDADELE…LDLDDFGDEH (63 aa)) form a disordered region. Residues 1171 to 1180 (VDEDADELEV) are compositionally biased toward acidic residues. Positions 1189–1198 (PEEKEEKEKE) are enriched in basic and acidic residues. The segment covering 1199 to 1232 (DSDEYDDLREEDVEPDLEELSLDDLDLDDFGDEH) has biased composition (acidic residues).

The protein belongs to the RNA polymerase beta chain family. As to quaternary structure, the RNAP catalytic core consists of 2 alpha, 1 beta, 1 beta' and 1 omega subunit. When a sigma factor is associated with the core the holoenzyme is formed, which can initiate transcription.

It catalyses the reaction RNA(n) + a ribonucleoside 5'-triphosphate = RNA(n+1) + diphosphate. DNA-dependent RNA polymerase catalyzes the transcription of DNA into RNA using the four ribonucleoside triphosphates as substrates. The chain is DNA-directed RNA polymerase subunit beta from Clostridium botulinum (strain Hall / ATCC 3502 / NCTC 13319 / Type A).